The primary structure comprises 521 residues: Ribonuclease Y (521 aa).

Residues 5–25 (MMTMILAVIAAAIGFLIGNLL) form a helical membrane-spanning segment. Residues 211–271 (TVSVVALPSD…VRREVAKLSL (61 aa)) enclose the KH domain. Residues 337–430 (VYQHSLEVAF…VQAADALSGA (94 aa)) form the HD domain.

Belongs to the RNase Y family.

Its subcellular location is the cell membrane. In terms of biological role, endoribonuclease that initiates mRNA decay. This chain is Ribonuclease Y, found in Geotalea uraniireducens (strain Rf4) (Geobacter uraniireducens).